Reading from the N-terminus, the 163-residue chain is Succinate dehydrogenase assembly factor 2-B, mitochondrial (163 aa).

Residues 1 to 23 (MFRQLRLTMDISGWIFMPWRRSL) constitute a mitochondrion transit peptide.

Belongs to the SDHAF2 family. As to quaternary structure, interacts with the flavoprotein subunit within the SDH catalytic dimer.

It is found in the mitochondrion matrix. In terms of biological role, plays an essential role in the assembly of succinate dehydrogenase (SDH), an enzyme complex (also referred to as respiratory complex II) that is a component of both the tricarboxylic acid (TCA) cycle and the mitochondrial electron transport chain, and which couples the oxidation of succinate to fumarate with the reduction of ubiquinone (coenzyme Q) to ubiquinol. Required for flavinylation (covalent attachment of FAD) of the flavoprotein subunit of the SDH catalytic dimer. This Drosophila ananassae (Fruit fly) protein is Succinate dehydrogenase assembly factor 2-B, mitochondrial.